The sequence spans 1160 residues: Protein translocase subunit SecA (1160 aa).

Residues Gln-162 and 180–184 (GEGKT) each bind ATP. A disordered region spans residues 342 to 362 (LLEEKEEAEEEGDSRRAQELE). The span at 344 to 353 (EEKEEAEEEG) shows a compositional bias: acidic residues. Asp-726 contributes to the ATP binding site. A disordered region spans residues 1060 to 1134 (EVQTEGQGPR…RNEYVTVRNN (75 aa)). A compositionally biased stretch (polar residues) spans 1074–1083 (QRNAQTQHDS). A compositionally biased stretch (basic and acidic residues) spans 1104 to 1115 (AAERDPTVEEKQ).

This sequence belongs to the SecA family. In terms of assembly, monomer and homodimer. Part of the essential Sec protein translocation apparatus which comprises SecA, SecYEG and auxiliary proteins SecDF. Other proteins may also be involved.

It is found in the cell inner membrane. The protein localises to the cytoplasm. The enzyme catalyses ATP + H2O + cellular proteinSide 1 = ADP + phosphate + cellular proteinSide 2.. In terms of biological role, part of the Sec protein translocase complex. Interacts with the SecYEG preprotein conducting channel. Has a central role in coupling the hydrolysis of ATP to the transfer of proteins into and across the cell membrane, serving as an ATP-driven molecular motor driving the stepwise translocation of polypeptide chains across the membrane. This is Protein translocase subunit SecA from Salinibacter ruber (strain DSM 13855 / M31).